The chain runs to 319 residues: Acetyl-coenzyme A carboxylase carboxyl transferase subunit alpha (319 aa).

The 256-residue stretch at 38–293 (HALQDKLRLR…KAVLLNELDA (256 aa)) folds into the CoA carboxyltransferase C-terminal domain.

This sequence belongs to the AccA family. Acetyl-CoA carboxylase is a heterohexamer composed of biotin carboxyl carrier protein (AccB), biotin carboxylase (AccC) and two subunits each of ACCase subunit alpha (AccA) and ACCase subunit beta (AccD).

It is found in the cytoplasm. It carries out the reaction N(6)-carboxybiotinyl-L-lysyl-[protein] + acetyl-CoA = N(6)-biotinyl-L-lysyl-[protein] + malonyl-CoA. Its pathway is lipid metabolism; malonyl-CoA biosynthesis; malonyl-CoA from acetyl-CoA: step 1/1. Component of the acetyl coenzyme A carboxylase (ACC) complex. First, biotin carboxylase catalyzes the carboxylation of biotin on its carrier protein (BCCP) and then the CO(2) group is transferred by the carboxyltransferase to acetyl-CoA to form malonyl-CoA. The chain is Acetyl-coenzyme A carboxylase carboxyl transferase subunit alpha from Stenotrophomonas maltophilia (strain R551-3).